Here is a 28-residue protein sequence, read N- to C-terminus: Potassium channel toxin alpha-KTx 9.5 (28 aa).

3 disulfide bridges follow: cysteine 3–cysteine 19, cysteine 6–cysteine 24, and cysteine 10–cysteine 26. Valine 28 bears the Valine amide mark.

As to expression, expressed by the venom gland.

The protein localises to the secreted. In terms of biological role, blocks voltage-gated potassium channels Kv1.1/KCNA1 (IC(50)=145 nM), Kv1.2/KCNA2 (IC(50)=2.5 nM), and Kv1.3/KCNA3 (IC(50)=15). Also inhibits calcium-activated potassium channels (KCa/KCNN). The sequence is that of Potassium channel toxin alpha-KTx 9.5 from Buthus occitanus tunetanus (Common European scorpion).